Here is a 428-residue protein sequence, read N- to C-terminus: tRNA modification GTPase MnmE (428 aa).

(6S)-5-formyl-5,6,7,8-tetrahydrofolate-binding residues include Arg20, Glu77, and Lys117. Residues 213–351 (GFEVAIVGSP…LVSRISDTLR (139 aa)) enclose the TrmE-type G domain. GTP-binding positions include 223-228 (NVGKST), 242-248 (SEYAGTT), and 267-270 (DTAG). Mg(2+) contacts are provided by Ser227 and Thr248. Lys428 contacts (6S)-5-formyl-5,6,7,8-tetrahydrofolate.

It belongs to the TRAFAC class TrmE-Era-EngA-EngB-Septin-like GTPase superfamily. TrmE GTPase family. In terms of assembly, homodimer. Heterotetramer of two MnmE and two MnmG subunits. Requires K(+) as cofactor.

Its subcellular location is the cytoplasm. Functionally, exhibits a very high intrinsic GTPase hydrolysis rate. Involved in the addition of a carboxymethylaminomethyl (cmnm) group at the wobble position (U34) of certain tRNAs, forming tRNA-cmnm(5)s(2)U34. This chain is tRNA modification GTPase MnmE, found in Ruegeria sp. (strain TM1040) (Silicibacter sp.).